We begin with the raw amino-acid sequence, 184 residues long: Ribosome maturation factor RimM (184 aa).

The PRC barrel domain maps to 105–184; it reads EDEFYWRELF…RIEVDWDPAF (80 aa).

The protein belongs to the RimM family. Binds ribosomal protein uS19.

Its subcellular location is the cytoplasm. Functionally, an accessory protein needed during the final step in the assembly of 30S ribosomal subunit, possibly for assembly of the head region. Essential for efficient processing of 16S rRNA. May be needed both before and after RbfA during the maturation of 16S rRNA. It has affinity for free ribosomal 30S subunits but not for 70S ribosomes. This Vibrio cholerae serotype O1 (strain ATCC 39541 / Classical Ogawa 395 / O395) protein is Ribosome maturation factor RimM.